A 301-amino-acid polypeptide reads, in one-letter code: Probable alpha-L-glutamate ligase (301 aa).

The region spanning 104–287 (LQLLSRRGVG…IASQIIAFIE (184 aa)) is the ATP-grasp domain. ATP is bound by residues lysine 141, 178–179 (EF), aspartate 187, and 211–213 (RSN). Mg(2+)-binding residues include aspartate 248, glutamate 260, and asparagine 262. 3 residues coordinate Mn(2+): aspartate 248, glutamate 260, and asparagine 262.

Belongs to the RimK family. Mg(2+) is required as a cofactor. Mn(2+) serves as cofactor.

This Hydrogenovibrio crunogenus (strain DSM 25203 / XCL-2) (Thiomicrospira crunogena) protein is Probable alpha-L-glutamate ligase.